A 123-amino-acid polypeptide reads, in one-letter code: Molluscan insulin-related peptide 1 (123 aa).

The signal sequence occupies residues 1-31 (MAGVRLVFTKAFMVTVLLTLLLNIGVKPAEG). Q32 carries the pyrrolidone carboxylic acid modification. Cystine bridges form between C48-C109, C60-C122, and C108-C113. Residues 68–69 (MV) constitute a propeptide that is removed on maturation. Q99 is modified (pyrrolidone carboxylic acid).

The protein belongs to the insulin family. Heterodimer of a B chain and an A chain linked by two disulfide bonds. In terms of tissue distribution, expressed in the cerebral light-green cells which are giant neuroendocrines cells involved in the control of growth.

The protein localises to the cytoplasmic vesicle. Its subcellular location is the secretory vesicle. The sequence is that of Molluscan insulin-related peptide 1 from Lymnaea stagnalis (Great pond snail).